Here is a 527-residue protein sequence, read N- to C-terminus: Light-independent protochlorophyllide reductase subunit B (527 aa).

Aspartate 36 contacts [4Fe-4S] cluster. The Proton donor role is filled by aspartate 290. 425–426 (GL) contributes to the substrate binding site.

The protein belongs to the ChlB/BchB/BchZ family. In terms of assembly, protochlorophyllide reductase is composed of three subunits; ChlL, ChlN and ChlB. Forms a heterotetramer of two ChlB and two ChlN subunits. [4Fe-4S] cluster is required as a cofactor.

The enzyme catalyses chlorophyllide a + oxidized 2[4Fe-4S]-[ferredoxin] + 2 ADP + 2 phosphate = protochlorophyllide a + reduced 2[4Fe-4S]-[ferredoxin] + 2 ATP + 2 H2O. Its pathway is porphyrin-containing compound metabolism; chlorophyll biosynthesis (light-independent). Component of the dark-operative protochlorophyllide reductase (DPOR) that uses Mg-ATP and reduced ferredoxin to reduce ring D of protochlorophyllide (Pchlide) to form chlorophyllide a (Chlide). This reaction is light-independent. The NB-protein (ChlN-ChlB) is the catalytic component of the complex. This Synechococcus sp. (strain RCC307) protein is Light-independent protochlorophyllide reductase subunit B.